Reading from the N-terminus, the 445-residue chain is Argininosuccinate synthase (445 aa).

ATP is bound by residues 17-25 (AFSGGLDTS) and Ala43. Tyr99 lines the L-citrulline pocket. Gly129 and Thr131 together coordinate ATP. 3 residues coordinate L-aspartate: Thr131, Asn135, and Asp136. Asn135 is an L-citrulline binding site. Asp136 lines the ATP pocket. Arg139 and Ser192 together coordinate L-citrulline. Asp194 provides a ligand contact to ATP. 3 residues coordinate L-citrulline: Thr201, Glu203, and Glu280.

Belongs to the argininosuccinate synthase family. Type 2 subfamily. In terms of assembly, homotetramer.

The protein localises to the cytoplasm. The enzyme catalyses L-citrulline + L-aspartate + ATP = 2-(N(omega)-L-arginino)succinate + AMP + diphosphate + H(+). The protein operates within amino-acid biosynthesis; L-arginine biosynthesis; L-arginine from L-ornithine and carbamoyl phosphate: step 2/3. The chain is Argininosuccinate synthase from Bradyrhizobium sp. (strain BTAi1 / ATCC BAA-1182).